A 236-amino-acid polypeptide reads, in one-letter code: Phosphoribosylaminoimidazole-succinocarboxamide synthase (236 aa).

Belongs to the SAICAR synthetase family.

The enzyme catalyses 5-amino-1-(5-phospho-D-ribosyl)imidazole-4-carboxylate + L-aspartate + ATP = (2S)-2-[5-amino-1-(5-phospho-beta-D-ribosyl)imidazole-4-carboxamido]succinate + ADP + phosphate + 2 H(+). It participates in purine metabolism; IMP biosynthesis via de novo pathway; 5-amino-1-(5-phospho-D-ribosyl)imidazole-4-carboxamide from 5-amino-1-(5-phospho-D-ribosyl)imidazole-4-carboxylate: step 1/2. The sequence is that of Phosphoribosylaminoimidazole-succinocarboxamide synthase from Streptococcus equi subsp. zooepidemicus (strain MGCS10565).